We begin with the raw amino-acid sequence, 153 residues long: Putative OPA3-like protein CG43998 (153 aa).

Residues 101 to 153 are a coiled coil; that stretch reads ELSKTYTKTKKQNQEIEDQKRVLDECVDCISADVERNQREINWIKAALKNVEK.

The protein belongs to the OPA3 family.

The protein is Putative OPA3-like protein CG43998 of Drosophila melanogaster (Fruit fly).